The chain runs to 504 residues: Putative glycerol-3-phosphate transporter 2 (504 aa).

The next 12 membrane-spanning stretches (helical) occupy residues 31-51, 84-104, 116-136, 145-165, 178-198, 210-230, 280-302, 324-344, 352-372, 378-398, 424-444, and 452-472; these read LSFKQYQALVFILTFVAYIAF, ALLGQIDLAFLSVYAVGMFVA, FLTIGMIGTGLFTALFGVAFW, FLAVQVMAGLFQSIGWPCIVA, MIMGVWSAHTSLGNIAGSLIA, FLGPAFLMTFLGIVVYLFLPV, IPGVAPFAFCLFFTKLVSYTFLY, GNLSTIFDVGGVVGGVLAGYI, AITAAGFMYLAIPALFLYRVF, TINVILMFTSGVFIIGPFALI, AIIDGTGSVGAAIGPVLTGYI, and VFYMLMTAALISGLLLTKLII.

The protein belongs to the major facilitator superfamily. Organophosphate:Pi antiporter (OPA) (TC 2.A.1.4) family. Expressed in the root-hair differentiation zone.

Its subcellular location is the membrane. The protein is Putative glycerol-3-phosphate transporter 2 of Arabidopsis thaliana (Mouse-ear cress).